The following is a 1209-amino-acid chain: Neural cell adhesion molecule L1-like protein (1209 aa).

An N-terminal signal peptide occupies residues Met1–Ala25. Residues Glu26 to Trp1083 are Extracellular-facing. Ig-like C2-type domains are found at residues Pro35–Glu124 and Pro128–Thr223. Cystine bridges form between Cys57-Cys109 and Cys153-Cys204. Asn87 carries N-linked (GlcNAc...) asparagine glycosylation. N-linked (GlcNAc...) asparagine glycosylation is found at Asn225 and Asn299. 4 consecutive Ig-like C2-type domains span residues Pro235–Glu328, Pro331–Asp417, Pro423–Asp510, and Thr515–Thr607. Intrachain disulfides connect Cys262–Cys310, Cys352–Cys401, Cys445–Cys494, and Cys536–Cys591. N-linked (GlcNAc...) asparagine glycosylation is present at Asn476. The short motif at Asp555–Ala558 is the DGEA element. N-linked (GlcNAc...) asparagine glycosylation is found at Asn562 and Asn580. Fibronectin type-III domains are found at residues Pro614–Ala709, Asn714–Asp807, Ala812–Gly914, and Gln918–Gly1015. The disordered stretch occupies residues His696–Asn717. Residues Asn767, Asn822, Asn945, and Asn1027 are each glycosylated (N-linked (GlcNAc...) asparagine). A helical transmembrane segment spans residues Phe1084–Val1104. Topologically, residues Lys1105 to Ala1209 are cytoplasmic. Basic and acidic residues predominate over residues Lys1115–Thr1133. Residues Lys1115–Glu1170 form a disordered region. Phosphoserine is present on residues Ser1148, Ser1161, and Ser1181. The segment covering Arg1150 to Ala1162 has biased composition (polar residues). Positions Phe1182–Tyr1186 match the FIG[AQ]Y motif.

The protein belongs to the immunoglobulin superfamily. L1/neurofascin/NgCAM family. May interact with L1CAM. May interact with ITGB1/ITGA1 heterodimer and ITGB1/ITGA2 heterodimer as well as with ANK3. In terms of processing, cleavage by metalloprotease ADAM8 in the extracellular part generates 2 soluble forms (125 kDa and 165 kDa) in vitro and is inhibited by metalloprotease inhibitors. In brain extracts, these two soluble forms are also present and are dramatically reduced in mice lacking ADAM8. Cleaved by BACE1. Post-translationally, N-glycosylated. Contains N-linked oligosaccharides with a sulfated carbohydrate structure type HNK-1 (SO4-3-GlcUABeta1,3GalBeta1,4GlcNAc). O-glycosylated. In terms of tissue distribution, expressed in the brain, in the cerebellum and in the spinal cord. Detected in the retina and the optic nerve. Expressed in neurons and glial cells in the central nervous system and by Schwann cells in the peripheral nervous system.

Its subcellular location is the cell membrane. The protein localises to the secreted. It is found in the extracellular space. The protein resides in the extracellular matrix. In terms of biological role, extracellular matrix and cell adhesion protein that plays a role in nervous system development and in synaptic plasticity. Both soluble and membranous forms promote neurite outgrowth of cerebellar and hippocampal neurons and suppress neuronal cell death. Plays a role in neuronal positioning of pyramidal neurons as well as in regulation of both the number of interneurons and the efficacy of GABAergic synapses. May play a role in regulating cell migration in nerve regeneration and cortical development. Potentiates integrin-dependent cell migration towards extracellular matrix proteins. Recruits ANK3 to the plasma membrane. The polypeptide is Neural cell adhesion molecule L1-like protein (Chl1) (Mus musculus (Mouse)).